A 596-amino-acid polypeptide reads, in one-letter code: Merlin (596 aa).

Ser13 is subject to Phosphoserine. The FERM domain maps to 22–311; it reads FTVRIVTMDA…GNHDLFMRRR (290 aa). Position 518 is a phosphoserine; by PAK (Ser518). Residues 560-580 are disordered; sequence VLHSESSDRGGPSSKHNTIKK.

Interacts with NHERF1, HGS and AGAP2. Interacts with SGSM3. Interacts (via FERM domain) with MPP1. Interacts with LAYN. Interacts with WWC1. Interacts with the CUL4A-RBX1-DDB1-VprBP/DCAF1 E3 ubiquitin-protein ligase complex. The unphosphorylated form interacts (via FERM domain) with VPRBP/DCAF1. Interacts (via FERM domain) with NOP53; the interaction is direct. Interacts with SCHIP1; the interaction is direct. Phosphorylation of Ser-518 inhibits nuclear localization by disrupting the intramolecular association of the FERM domain with the C-terminal tail. The dephosphorylation of Ser-518 favors the interaction with NOP53. In terms of processing, ubiquitinated by the CUL4A-RBX1-DDB1-DCAF1/VprBP E3 ubiquitin-protein ligase complex for ubiquitination and subsequent proteasome-dependent degradation.

Its subcellular location is the cell membrane. The protein localises to the cell projection. It is found in the cytoplasm. The protein resides in the cytoskeleton. It localises to the nucleus. In terms of biological role, probable regulator of the Hippo/SWH (Sav/Wts/Hpo) signaling pathway, a signaling pathway that plays a pivotal role in tumor suppression by restricting proliferation and promoting apoptosis. Along with WWC1 can synergistically induce the phosphorylation of LATS1 and LATS2 and can probably function in the regulation of the Hippo/SWH (Sav/Wts/Hpo) signaling pathway. May act as a membrane stabilizing protein. May inhibit PI3 kinase by binding to AGAP2 and impairing its stimulating activity. Suppresses cell proliferation and tumorigenesis by inhibiting the CUL4A-RBX1-DDB1-VprBP/DCAF1 E3 ubiquitin-protein ligase complex. Plays a role in lens development and is required for complete fiber cell terminal differentiation, maintenance of cell polarity and separation of the lens vesicle from the corneal epithelium. In Mus musculus (Mouse), this protein is Merlin (Nf2).